The following is a 280-amino-acid chain: Probable endonuclease 4 (280 aa).

Residues His69, His109, Glu145, Asp179, His182, His216, Asp229, His231, and Glu261 each coordinate Zn(2+).

The protein belongs to the AP endonuclease 2 family. Requires Zn(2+) as cofactor.

The enzyme catalyses Endonucleolytic cleavage to 5'-phosphooligonucleotide end-products.. Endonuclease IV plays a role in DNA repair. It cleaves phosphodiester bonds at apurinic or apyrimidinic (AP) sites, generating a 3'-hydroxyl group and a 5'-terminal sugar phosphate. The sequence is that of Probable endonuclease 4 from Actinobacillus pleuropneumoniae serotype 5b (strain L20).